The primary structure comprises 333 residues: Fe(3+)-citrate import system permease protein YfmD (333 aa).

The next 9 membrane-spanning stretches (helical) occupy residues 13–33 (LMMFIIALIIFIFGLGLNLSV), 67–87 (TLIGVFVGASLAVAGALMQAM), 97–117 (IFGVNAGASLFVVASLVILPA), 121–141 (SSVIFAFAGAAAGGAIVYMIA), 151–171 (LALSGMAVHLFLSSMTQAIII), 201–221 (FSVIGIGLALVFSGSVSVLGL), 238–258 (ILISLIILILSGASVAVAGPI), 279–299 (YVLPFSALFGAILLVYADVLA), and 302–322 (IAFPYESPVGIVTAIIGTPFF).

It belongs to the binding-protein-dependent transport system permease family. FecCD subfamily. As to quaternary structure, the complex is composed of one ATP-binding protein (YfmF), two transmembrane proteins (YfmD and YfmE) and a solute-binding protein (YfmC).

The protein resides in the cell membrane. Functionally, part of the ABC transporter complex YfmCDEF involved in citrate-dependent Fe(3+) import. Involved in the translocation of the substrate across the membrane. This is Fe(3+)-citrate import system permease protein YfmD (yfmD) from Bacillus subtilis (strain 168).